The following is a 115-amino-acid chain: NADH-ubiquinone oxidoreductase chain 3 (115 aa).

Helical transmembrane passes span 3–23, 55–75, and 84–104; these read FVLI…ITFW, FFLV…LLPL, and LPLM…SLAY.

Belongs to the complex I subunit 3 family. As to quaternary structure, core subunit of respiratory chain NADH dehydrogenase (Complex I) which is composed of 45 different subunits. Interacts with TMEM186. Interacts with TMEM242.

It is found in the mitochondrion inner membrane. The enzyme catalyses a ubiquinone + NADH + 5 H(+)(in) = a ubiquinol + NAD(+) + 4 H(+)(out). Its function is as follows. Core subunit of the mitochondrial membrane respiratory chain NADH dehydrogenase (Complex I) which catalyzes electron transfer from NADH through the respiratory chain, using ubiquinone as an electron acceptor. Essential for the catalytic activity of complex I. The polypeptide is NADH-ubiquinone oxidoreductase chain 3 (Pan troglodytes (Chimpanzee)).